Consider the following 222-residue polypeptide: Recombination protein RecR (222 aa).

Residues 57 to 72 (CPVCFNITDAERCDVC) form a C4-type zinc finger. Residues 80-173 (SVICVVEEPG…VVSRIAYGLP (94 aa)) enclose the Toprim domain. The tract at residues 189-222 (ALSGRRRVSEPASPPPPRRNDEEQDGAPARPPSH) is disordered.

Belongs to the RecR family.

In terms of biological role, may play a role in DNA repair. It seems to be involved in an RecBC-independent recombinational process of DNA repair. It may act with RecF and RecO. This is Recombination protein RecR from Deinococcus geothermalis (strain DSM 11300 / CIP 105573 / AG-3a).